Here is a 193-residue protein sequence, read N- to C-terminus: Ribosome maturation factor RimM (193 aa).

Residues 97 to 172 form the PRC barrel domain; the sequence is DDEFYLTDLV…LILADPPALV (76 aa). The interval 168–193 is disordered; sequence PPALVGDHEGPEEKGLDENEELGDRD. A compositionally biased stretch (basic and acidic residues) spans 173-193; sequence GDHEGPEEKGLDENEELGDRD.

Belongs to the RimM family. Binds ribosomal protein uS19.

It localises to the cytoplasm. In terms of biological role, an accessory protein needed during the final step in the assembly of 30S ribosomal subunit, possibly for assembly of the head region. Essential for efficient processing of 16S rRNA. May be needed both before and after RbfA during the maturation of 16S rRNA. It has affinity for free ribosomal 30S subunits but not for 70S ribosomes. The chain is Ribosome maturation factor RimM from Caulobacter vibrioides (strain ATCC 19089 / CIP 103742 / CB 15) (Caulobacter crescentus).